The chain runs to 59 residues: Cortexin domain containing 2 (59 aa).

Residues 20 to 40 (FAIAFVVLVFVFLIVMVFRCV) traverse the membrane as a helical segment.

Its subcellular location is the membrane. This is Cortexin domain containing 2 from Mus musculus (Mouse).